The primary structure comprises 64 residues: Large ribosomal subunit protein bL35 (64 aa).

Belongs to the bacterial ribosomal protein bL35 family.

This chain is Large ribosomal subunit protein bL35, found in Streptomyces coelicolor (strain ATCC BAA-471 / A3(2) / M145).